A 97-amino-acid chain; its full sequence is MKLRPLHDRVVIRRSEEETKTAGGIVLPGSAAEKPNQGEVVAVGTGKVLENGEVRPLAVKVGDKVVFGPYSGSNTVKVDGEDLLVMGENEILAVIEA.

This sequence belongs to the GroES chaperonin family. In terms of assembly, heptamer of 7 subunits arranged in a ring. Interacts with the chaperonin GroEL.

The protein localises to the cytoplasm. Its function is as follows. Together with the chaperonin GroEL, plays an essential role in assisting protein folding. The GroEL-GroES system forms a nano-cage that allows encapsulation of the non-native substrate proteins and provides a physical environment optimized to promote and accelerate protein folding. GroES binds to the apical surface of the GroEL ring, thereby capping the opening of the GroEL channel. The polypeptide is Co-chaperonin GroES (Ectopseudomonas mendocina (strain ymp) (Pseudomonas mendocina)).